A 130-amino-acid chain; its full sequence is MATTQNYGTGRRKTASARVFLRPGKGDIVVNGKPLDAYFGRETSRMVVRQPLEVAQAGNRFDVFATTAGGGANGQAGAIRLGIARALVEYDETLRGSMRAAGFMTRDAREVERKKVGLRKARRATQFSKR.

Belongs to the universal ribosomal protein uS9 family.

The chain is Small ribosomal subunit protein uS9 from Thioalkalivibrio sulfidiphilus (strain HL-EbGR7).